The chain runs to 564 residues: Potassium-transporting ATPase potassium-binding subunit (564 aa).

Helical transmembrane passes span 4–24 (YDYW…PFLG), 67–87 (MLAL…ILLF), 135–155 (AGLT…LVAL), 179–199 (LYGL…QGVP), 254–274 (WANL…VFTF), 286–306 (AILG…LWAE), 382–402 (AGMY…GLMI), 420–440 (LLVV…AIAA), 487–507 (LMLG…VLAL), and 528–548 (GPLF…LTFL).

The protein belongs to the KdpA family. In terms of assembly, the system is composed of three essential subunits: KdpA, KdpB and KdpC.

Its subcellular location is the cell inner membrane. In terms of biological role, part of the high-affinity ATP-driven potassium transport (or Kdp) system, which catalyzes the hydrolysis of ATP coupled with the electrogenic transport of potassium into the cytoplasm. This subunit binds the periplasmic potassium ions and delivers the ions to the membrane domain of KdpB through an intramembrane tunnel. The protein is Potassium-transporting ATPase potassium-binding subunit of Pseudomonas fluorescens (strain SBW25).